We begin with the raw amino-acid sequence, 152 residues long: Deoxyuridine 5'-triphosphate nucleotidohydrolase (152 aa).

Substrate is bound by residues 72–74 (RSG), Asn-85, 89–91 (TID), and Lys-99.

Belongs to the dUTPase family. Mg(2+) serves as cofactor.

The enzyme catalyses dUTP + H2O = dUMP + diphosphate + H(+). It participates in pyrimidine metabolism; dUMP biosynthesis; dUMP from dCTP (dUTP route): step 2/2. In terms of biological role, this enzyme is involved in nucleotide metabolism: it produces dUMP, the immediate precursor of thymidine nucleotides and it decreases the intracellular concentration of dUTP so that uracil cannot be incorporated into DNA. The protein is Deoxyuridine 5'-triphosphate nucleotidohydrolase of Bradyrhizobium diazoefficiens (strain JCM 10833 / BCRC 13528 / IAM 13628 / NBRC 14792 / USDA 110).